A 237-amino-acid polypeptide reads, in one-letter code: uncharacterized protein (237 aa).

Residues 213–237 form a disordered region; the sequence is GQGKYLKLDSNTTENKTTKQNETGG. Positions 223-237 are enriched in low complexity; sequence NTTENKTTKQNETGG.

This is an uncharacterized protein from Methanothermobacter thermautotrophicus (Methanobacterium thermoformicicum).